Here is a 2572-residue protein sequence, read N- to C-terminus: MAEAVKPRRAKAKASRTKGKEKKKHEALQTCDAGPLPETCREQESPCPASELKGDDLKSSADPQLHSDVCGWNESEMFDIPLTSLTIGDEGPPVQDTEDLKERGEVTAGDGDDEMELKVDPGDNVIAKGEPCKNFPEVEDHTLIQCGPPESTLQPDFPCTQQAVEGSHAREHPTRKQDEAALGCSKVFQNVSLHSSYEAKEVSQPPRVKKLYPELPAEIAEVPALVAVKPLLRSERLYPELPSQPEVTPFTKEQLKLLEPGSWLENVASYVEEFDNIAHQDRHEFYELLLNYSRCRKQLLLAEAELLTLMSDCHSAKSRLWHFKDEQMAVQGICADQVKVYGHHHYQRVEMNENVLGELKKLFDAKSEHLHQTLTLHSYTSVLSRLQVESYIFTLLNSSAALRSLAVYQADQVPKLTESIPSDVCQLKECISVLFMFTRRVSEDAQFHEDILLWLQKLVSVLQRVGCPGDHFFLLNHVLRCPAGIRKWAVPFIQIKVLNNPSGVFHFMQSLALLMSPVKNRAEFMCHMKPSEWKPSSSGPASGNWTLVDEAGEEDEDPETSWILLNEDDLVTLLSQFPFQELFQHLLGFKAKGDYLPETTRPQEMMKIFAFANSLVELLAVGLDTFNRARYRQFVKRIGYLIRMTLGYVSDHWAQYVSHSTGAGLTPQPYSMEKLQVEFDELFLRAVLHVLKAKRLGIWLFMSEMPFGTLSVQMLWKLLYLMHQVESGDLQQLCASLQPAECKRRLQDPEHFASFEKCLSSINSSEEICLLTAFAQMARARRTNVDEDFIKIIVLEIYEVSYVTLSTRETFSKVGRELLGAIAAVHPEIISVLLDRVQETIDQVGMVSLYLFKELPLYLWRPSAPEIAVIRDWLLNNNLTAVKNKLACVILEGLNWGFTEQGTLHLDQALHTEVALLVLEAYQKYLAQKPYTGLISESMKQVSYLASIVRYGETPETSFNQWAWNLILRLKLHKNDFGRQNFPVIPFCSTVPDMTESSMFHPLLKAVKSGLPIGCYLALAVTAVGHSLEKFCAEGIPLLGVLVQSRHLRAVVHALDKILPVFYPYQCYLLKNEQFLSNLLLFLQLDSGVPQGVTQQVTHRVAQHLTGAVHGDNVKLLSSMIQAHICVSTQPDGVGPVAVLEFWVQALISQHLWYREQPILFLMDHLCKTAFHLMQEDCVQKLLYQQHKNALGYHCDRSLLSSLVNWIVAGNITPSFVEGLSTSTQVWFAWTVLNMESIFEEDSQLRRVVERELVINAFSPDQALKKAQVQLKLPIVPSLQRLLIYRWAHQALVTPSDHPLLPLIWQKFFLLYLHRPGPQYGLPVDGCIGRRFFQSPSHVNLLKDMKRRLTEVADFHYAASKALRVPAEGSEGTPEGQAGTPGFLTSPELHRELVRLFNVYVLWLEDENFQKGDTYIPSLPKHYDVHRLAKVMQNQQDLWMEYVNMERIQHEFQETVALWTQAKLESHAAPCSSSAQLDFTDPLLAKARVLSNLEKHEAPHPPLLLHPVRPPVPLIPSAALLTQKDSTQLMCTDLNLLQQQARSATLRESQQVALDGELLETMPKQYVNREDQATLHLECRGSSGKKCQGAAVVTVQFEGMNKNEAVSQQIHVLQKEVRQLQAEAAQPPALNVVEAAVHAENLITALVNTYKLQPTPGVQKLGISLFFTVVDHVSDETQRHPPTRQFFTSCIEILGQVFVSGTKSECRKLLQTILKNRRLCSLLAPFFTPNAAPAEFIQLYERVVTCLREDNSDVIFMLLTKFDIQQWLNSTKPPLSDRTRLLESIHLALTAWGLEPEEDILMPFNLFCKHWTHLLLYQFPDQYSDVLRLLVQSSAEQLLSPECWKATLRALGCYAPSSQQGAASVESSGLHSASRVLLSDKQVMETVQWLSDFFYKLRLSKLDFKSFGLFSKWSPYMADVKTFLGYLVKRLTDLEIASLSQDPTASSKEVLRSLHAQIIQLFKPWILVLEDAESSHQRHYPWLESDTAVASSIVQLFSDCVGSLHTSFKDRLLPGDEGALRLHLLHYCETCTAPKMPEFILYAFHSAYQRLEWKDLHPDQRLMEAFFKVERGSPKSCFLFLGSVLCRVNWVSVLSDAWNPSPLPETQSMAVCLLFMMVLLAKEAQLVDEPDSPLLSLLGQTSSLSWHLVDLVSYQSVLGYFSSHYPPSVVLANDCSSELIVKLLKVSAGLSAHADGRKHVDIVPKCQAFTHQMVQFLSALEQTGKITFPALEREISKLLDDIIIFNPPDMDSQTRHMALSSFFVEVLMMMNNAAVPTAEFLAVSIRTWIGQRVHGLIVLPLLTAACQSLASVRHMAEITEACIMAYFKESSLDQNLGWGPVLVSLQVPQLTARDFLEECLALGSCLTLYVYLLQCLNSEQTVKNDMKMLLVVSGWLEQVYPSSAQEEAKLFLWWHQILQLSLIQLEQNDSVLTESVIRILLMLQSRQSLMAEERLSSGILGAIGLGRRSPLSNRFRVAARSMAAFLLVQVPAEDQIRLKPSSELHLAPKAQQVLTALESMTLSKQYVEYQDQILHALQFIRHPGHCLQNGKSFLALLVNRLYPEVHYLDNIR.

2 disordered regions span residues M1–D68 and S84–V125. The span at P7 to H25 shows a compositional bias: basic residues. The stretch at M1600–Q1626 forms a coiled coil.

Belongs to the EPG5 family. In terms of assembly, interacts with RAN.

It is found in the cytoplasm. The protein localises to the perinuclear region. The protein resides in the lysosome. In terms of biological role, involved in autophagy. May play a role in a late step of autophagy, such as clearance of autophagosomal cargo. Plays a key role in innate and adaptive immune response triggered by unmethylated cytidine-phosphate-guanosine (CpG) dinucleotides from pathogens, and mediated by the nucleotide-sensing receptor TLR9. It is necessary for the translocation of CpG dinucleotides from early endosomes to late endosomes and lysosomes, where TLR9 is located. This Mus musculus (Mouse) protein is Ectopic P granules protein 5 homolog (Epg5).